We begin with the raw amino-acid sequence, 261 residues long: uncharacterized protein (261 aa).

Residues 1–12 (MSRTSSQNQEII) are compositionally biased toward polar residues. The segment at 1-139 (MSRTSSQNQE…KELDTINKKT (139 aa)) is disordered. Positions 23 to 55 (SSKPSKSSKPSKSSKPSKSSKTSKSSRSSGSKS) are enriched in low complexity. Over residues 65 to 74 (SRKDKYKEEY) the composition is skewed to basic and acidic residues. Positions 79–108 (YPDEQEYEQEYEQEYEQEYQDNGEQTEEFV) are enriched in acidic residues. Over residues 122-139 (DERQTQSNKELDTINKKT) the composition is skewed to basic and acidic residues. Coiled coils occupy residues 151 to 181 (MDHD…IIKL) and 218 to 243 (EDII…KKIE).

This is an uncharacterized protein from Acanthamoeba polyphaga (Amoeba).